Reading from the N-terminus, the 188-residue chain is Elongation factor P-like protein (188 aa).

Belongs to the elongation factor P family.

This chain is Elongation factor P-like protein, found in Xanthomonas axonopodis pv. citri (strain 306).